The sequence spans 160 residues: Transcription antitermination protein NusB (160 aa).

This sequence belongs to the NusB family.

Its function is as follows. Involved in transcription antitermination. Required for transcription of ribosomal RNA (rRNA) genes. Binds specifically to the boxA antiterminator sequence of the ribosomal RNA (rrn) operons. The chain is Transcription antitermination protein NusB from Salinibacter ruber (strain DSM 13855 / M31).